We begin with the raw amino-acid sequence, 292 residues long: 4-diphosphocytidyl-2-C-methyl-D-erythritol kinase (292 aa).

Lys20 is an active-site residue. 103–113 provides a ligand contact to ATP; that stretch reads PMGGGIGGGSS. The active site involves Asp145.

It belongs to the GHMP kinase family. IspE subfamily.

The catalysed reaction is 4-CDP-2-C-methyl-D-erythritol + ATP = 4-CDP-2-C-methyl-D-erythritol 2-phosphate + ADP + H(+). The protein operates within isoprenoid biosynthesis; isopentenyl diphosphate biosynthesis via DXP pathway; isopentenyl diphosphate from 1-deoxy-D-xylulose 5-phosphate: step 3/6. Its function is as follows. Catalyzes the phosphorylation of the position 2 hydroxy group of 4-diphosphocytidyl-2C-methyl-D-erythritol. The polypeptide is 4-diphosphocytidyl-2-C-methyl-D-erythritol kinase (Cupriavidus metallidurans (strain ATCC 43123 / DSM 2839 / NBRC 102507 / CH34) (Ralstonia metallidurans)).